The sequence spans 297 residues: MSNWLVDKLIPSIMRSEVKKSSVPEGLWHKCPSCEAVLYRPELEKTLDVCPKCNHHMRIGARARIDIFLDAEGRAELGADLEPVDRLKFRDGKKYKDRLTGAQKQTGEKDALISMSGTLMGMPIVVSAFEFSFMGGSMGAIVGERFVRAANYALEHRCPMVCFSASGGARMQEALISLMQMAKTSAVLARLREEGIPFISVLTDPVYGGVSASLAMLGDVIVGEPKALIGFAGPRVIEQTVREKLPEGFQRSEFLLEHGAIDLIISRGELRPRLARLLAQMTGQDTPEQAREAAAVA.

The region spanning 27–296 (LWHKCPSCEA…PEQAREAAAV (270 aa)) is the CoA carboxyltransferase N-terminal domain. 4 residues coordinate Zn(2+): Cys-31, Cys-34, Cys-50, and Cys-53. The C4-type zinc finger occupies 31-53 (CPSCEAVLYRPELEKTLDVCPKC).

It belongs to the AccD/PCCB family. In terms of assembly, acetyl-CoA carboxylase is a heterohexamer composed of biotin carboxyl carrier protein (AccB), biotin carboxylase (AccC) and two subunits each of ACCase subunit alpha (AccA) and ACCase subunit beta (AccD). Zn(2+) is required as a cofactor.

The protein localises to the cytoplasm. The catalysed reaction is N(6)-carboxybiotinyl-L-lysyl-[protein] + acetyl-CoA = N(6)-biotinyl-L-lysyl-[protein] + malonyl-CoA. Its pathway is lipid metabolism; malonyl-CoA biosynthesis; malonyl-CoA from acetyl-CoA: step 1/1. Component of the acetyl coenzyme A carboxylase (ACC) complex. Biotin carboxylase (BC) catalyzes the carboxylation of biotin on its carrier protein (BCCP) and then the CO(2) group is transferred by the transcarboxylase to acetyl-CoA to form malonyl-CoA. The sequence is that of Acetyl-coenzyme A carboxylase carboxyl transferase subunit beta from Pseudomonas putida (strain GB-1).